The sequence spans 411 residues: UPF0761 membrane protein PA0951 (411 aa).

Helical transmembrane passes span 36-56 (LFAV…IPAF), 92-112 (HLTW…LVTI), 132-152 (FLLY…GFAV), 174-194 (LLGL…YSAV), 207-229 (GGVF…VSLF), and 244-264 (IFLL…VLVC).

Belongs to the UPF0761 family.

The protein localises to the cell inner membrane. This chain is UPF0761 membrane protein PA0951, found in Pseudomonas aeruginosa (strain ATCC 15692 / DSM 22644 / CIP 104116 / JCM 14847 / LMG 12228 / 1C / PRS 101 / PAO1).